The following is a 446-amino-acid chain: Putative zinc metalloprotease NMA0084 (446 aa).

Zn(2+) is bound at residue His-18. Residue Glu-19 is part of the active site. Position 22 (His-22) interacts with Zn(2+). The next 3 membrane-spanning stretches (helical) occupy residues 93–115 (IAIV…GLSF), 376–398 (FLAL…LDGG), and 419–438 (NIGL…VAFF). In terms of domain architecture, PDZ spans 100-181 (PLTNLALAVL…KVAVGVQTAS (82 aa)).

This sequence belongs to the peptidase M50B family. Requires Zn(2+) as cofactor.

The protein resides in the cell inner membrane. The protein is Putative zinc metalloprotease NMA0084 of Neisseria meningitidis serogroup A / serotype 4A (strain DSM 15465 / Z2491).